A 173-amino-acid polypeptide reads, in one-letter code: Adenine phosphoribosyltransferase (173 aa).

The protein belongs to the purine/pyrimidine phosphoribosyltransferase family. In terms of assembly, homodimer.

The protein localises to the cytoplasm. The enzyme catalyses AMP + diphosphate = 5-phospho-alpha-D-ribose 1-diphosphate + adenine. It functions in the pathway purine metabolism; AMP biosynthesis via salvage pathway; AMP from adenine: step 1/1. In terms of biological role, catalyzes a salvage reaction resulting in the formation of AMP, that is energically less costly than de novo synthesis. This Macrococcus caseolyticus (strain JCSC5402) (Macrococcoides caseolyticum) protein is Adenine phosphoribosyltransferase.